The following is a 285-amino-acid chain: Transmembrane protein 53-B (285 aa).

Residues 165-185 traverse the membrane as a helical segment; that stretch reads FLALAAFAIMVIILRIVLYPV.

The protein belongs to the TMEM53 family.

The protein resides in the nucleus outer membrane. Its function is as follows. Ensures normal bone formation, through the negative regulation of bone morphogenetic protein (BMP) signaling in osteoblast lineage cells by blocking cytoplasm-nucleus translocation of phosphorylated SMAD proteins. The polypeptide is Transmembrane protein 53-B (tmem53-b) (Xenopus laevis (African clawed frog)).